A 2555-amino-acid chain; its full sequence is Ubiquitin carboxyl-terminal hydrolase 9Y (2555 aa).

Positions 1–66 are disordered; that stretch reads MTAITHGSPV…APPQHEDEEP (66 aa). Polar residues predominate over residues 13-45; it reads NDSQGQVLDGQSQHLFQQNQTSSPDSSNENSVA. S589 is subject to Phosphoserine. The residue at position 591 (T591) is a Phosphothreonine. Residues 972–997 are disordered; that stretch reads NMPSSPDSSSDSSTASPGNHRNHYND. Residues 974 to 984 are compositionally biased toward low complexity; it reads PSSPDSSSDSS. The 400-residue stretch at 1559-1958 folds into the USP domain; sequence VGLKNAGATC…NAYILFYEQM (400 aa). The active-site Nucleophile is the C1568. The Zn(2+) site is built by C1729, H1731, C1773, and C1776. The Proton acceptor role is filled by H1881. S2444 carries the phosphoserine modification. Residues 2476 to 2485 are compositionally biased toward acidic residues; sequence PEEEPDDQDA. Residues 2476-2555 form a disordered region; the sequence is PEEEPDDQDA…EVSSPQMKDQ (80 aa). Polar residues-rich tracts occupy residues 2504–2514 and 2528–2555; these read PASQYQQNNHV and NNPQ…MKDQ. Y2541 bears the Phosphotyrosine mark. S2548 carries the post-translational modification Phosphoserine.

The protein belongs to the peptidase C19 family. In terms of tissue distribution, widely expressed in embryonic and adult tissues.

It catalyses the reaction Thiol-dependent hydrolysis of ester, thioester, amide, peptide and isopeptide bonds formed by the C-terminal Gly of ubiquitin (a 76-residue protein attached to proteins as an intracellular targeting signal).. It participates in protein modification; protein ubiquitination. Functionally, deubiquitinase that mediates deubiquitination of target proteins. May stabilize target proteins that are important for male germ cell development. The protein is Ubiquitin carboxyl-terminal hydrolase 9Y of Homo sapiens (Human).